Here is a 120-residue protein sequence, read N- to C-terminus: Ribosome-binding factor A (120 aa).

The protein belongs to the RbfA family. Monomer. Binds 30S ribosomal subunits, but not 50S ribosomal subunits or 70S ribosomes.

Its subcellular location is the cytoplasm. In terms of biological role, one of several proteins that assist in the late maturation steps of the functional core of the 30S ribosomal subunit. Associates with free 30S ribosomal subunits (but not with 30S subunits that are part of 70S ribosomes or polysomes). Required for efficient processing of 16S rRNA. May interact with the 5'-terminal helix region of 16S rRNA. This is Ribosome-binding factor A from Limosilactobacillus fermentum (strain NBRC 3956 / LMG 18251) (Lactobacillus fermentum).